A 256-amino-acid chain; its full sequence is Triosephosphate isomerase (256 aa).

9–11 (NWK) lines the substrate pocket. The active-site Electrophile is His-95. Glu-167 functions as the Proton acceptor in the catalytic mechanism. Substrate-binding positions include Gly-173, Ser-212, and 233-234 (GG).

The protein belongs to the triosephosphate isomerase family. As to quaternary structure, homodimer.

It localises to the cytoplasm. It carries out the reaction D-glyceraldehyde 3-phosphate = dihydroxyacetone phosphate. It participates in carbohydrate biosynthesis; gluconeogenesis. The protein operates within carbohydrate degradation; glycolysis; D-glyceraldehyde 3-phosphate from glycerone phosphate: step 1/1. In terms of biological role, involved in the gluconeogenesis. Catalyzes stereospecifically the conversion of dihydroxyacetone phosphate (DHAP) to D-glyceraldehyde-3-phosphate (G3P). This Proteus mirabilis (strain HI4320) protein is Triosephosphate isomerase.